The sequence spans 310 residues: 4-hydroxyproline 2-epimerase (310 aa).

Cysteine 88 serves as the catalytic Proton acceptor. Substrate-binding positions include 89–90, histidine 208, and aspartate 232; that span reads GH. Cysteine 236 functions as the Proton donor in the catalytic mechanism. 237–238 lines the substrate pocket; sequence GT.

This sequence belongs to the proline racemase family.

The enzyme catalyses trans-4-hydroxy-L-proline = cis-4-hydroxy-D-proline. Catalyzes the epimerization of trans-4-hydroxy-L-proline (t4LHyp) to cis-4-hydroxy-D-proline (c4DHyp). Is likely involved in a degradation pathway that converts t4LHyp to alpha-ketoglutarate. Displays no proline racemase activity. The protein is 4-hydroxyproline 2-epimerase of Burkholderia cenocepacia (strain ATCC BAA-245 / DSM 16553 / LMG 16656 / NCTC 13227 / J2315 / CF5610) (Burkholderia cepacia (strain J2315)).